A 544-amino-acid polypeptide reads, in one-letter code: Chaperonin GroEL (544 aa).

Residues 29–32, lysine 50, 86–90, glycine 414, 479–481, and aspartate 495 each bind ATP; these read TLGP, DGTTT, and DAA.

The protein belongs to the chaperonin (HSP60) family. Forms a cylinder of 14 subunits composed of two heptameric rings stacked back-to-back. Interacts with the co-chaperonin GroES.

It is found in the cytoplasm. It catalyses the reaction ATP + H2O + a folded polypeptide = ADP + phosphate + an unfolded polypeptide.. Its function is as follows. Together with its co-chaperonin GroES, plays an essential role in assisting protein folding. The GroEL-GroES system forms a nano-cage that allows encapsulation of the non-native substrate proteins and provides a physical environment optimized to promote and accelerate protein folding. The polypeptide is Chaperonin GroEL (Treponema denticola (strain ATCC 35405 / DSM 14222 / CIP 103919 / JCM 8153 / KCTC 15104)).